A 127-amino-acid chain; its full sequence is Ribonuclease P protein component (127 aa).

The protein belongs to the RnpA family. Consists of a catalytic RNA component (M1 or rnpB) and a protein subunit.

It carries out the reaction Endonucleolytic cleavage of RNA, removing 5'-extranucleotides from tRNA precursor.. In terms of biological role, RNaseP catalyzes the removal of the 5'-leader sequence from pre-tRNA to produce the mature 5'-terminus. It can also cleave other RNA substrates such as 4.5S RNA. The protein component plays an auxiliary but essential role in vivo by binding to the 5'-leader sequence and broadening the substrate specificity of the ribozyme. This is Ribonuclease P protein component from Rippkaea orientalis (strain PCC 8801 / RF-1) (Cyanothece sp. (strain PCC 8801)).